A 251-amino-acid polypeptide reads, in one-letter code: Capsid protein (251 aa).

Residues 1–35 form a disordered region; sequence MPKRDAPWRHMAGTSKVSRSGNYSPSGGMGSKSNK. A Bipartite nuclear localization signal motif is present at residues 3-20; the sequence is KRDAPWRHMAGTSKVSRS. Residues 15-35 show a composition bias toward polar residues; it reads SKVSRSGNYSPSGGMGSKSNK. The Nuclear localization signal signature appears at 35–49; the sequence is KANAWVNRPMYRKPR. Residues 54-71 fold into a zinc finger; sequence YKSPDVPKGCEGPCKVQS. A Nuclear export signal motif is present at residues 96–117; that stretch reads ITHRVGKRFCVKSVYILGKIWM. The short motif at 195–242 is the Bipartite nuclear localization signal element; sequence RRFWKVNNHVVYNHQEAGKYENHTENALLLYMACTHASNPVYATLKIR.

This sequence belongs to the geminiviridae capsid protein family. Homomultimer. Binds to single-stranded and double-stranded viral DNA. Interacts (via nuclear localization signals) with host importin alpha-1a.

The protein localises to the virion. It is found in the host nucleus. Functionally, encapsidates the viral DNA into characteristic twinned ('geminate') particles. Binds the genomic viral ssDNA and shuttles it into and out of the cell nucleus. The CP of bipartite geminiviruses is not required for cell-to-cell or systemic movement. This Macroptilium lathyroides (Lima bean) protein is Capsid protein.